The sequence spans 277 residues: Undecaprenyl-diphosphatase (277 aa).

7 consecutive transmembrane segments (helical) span residues 5 to 25 (WTAA…FLPI), 44 to 64 (RAMA…VWEF), 86 to 106 (LNLL…ADTI), 110 to 130 (LFNA…MLWA), 184 to 204 (AATE…AVYS), 219 to 239 (VFAI…RALL), and 255 to 275 (IAFG…WASA).

This sequence belongs to the UppP family.

The protein resides in the cell inner membrane. The catalysed reaction is di-trans,octa-cis-undecaprenyl diphosphate + H2O = di-trans,octa-cis-undecaprenyl phosphate + phosphate + H(+). Its function is as follows. Catalyzes the dephosphorylation of undecaprenyl diphosphate (UPP). Confers resistance to bacitracin. The sequence is that of Undecaprenyl-diphosphatase from Pseudomonas savastanoi pv. phaseolicola (strain 1448A / Race 6) (Pseudomonas syringae pv. phaseolicola (strain 1448A / Race 6)).